The chain runs to 88 residues: Small ribosomal subunit protein uS15c (88 aa).

This sequence belongs to the universal ribosomal protein uS15 family. In terms of assembly, part of the 30S ribosomal subunit.

The protein resides in the plastid. It localises to the chloroplast. The polypeptide is Small ribosomal subunit protein uS15c (rps15) (Arabis hirsuta (Hairy rock-cress)).